The sequence spans 599 residues: Aspartate--tRNA(Asp/Asn) ligase (599 aa).

Glu-172 is a binding site for L-aspartate. The tract at residues 196–199 (QLFK) is aspartate. L-aspartate is bound at residue Arg-218. ATP-binding positions include 218–220 (RDE) and Gln-227. Residue His-455 participates in L-aspartate binding. Glu-489 is an ATP binding site. Residue Arg-496 coordinates L-aspartate. 541–544 (GLDR) serves as a coordination point for ATP.

This sequence belongs to the class-II aminoacyl-tRNA synthetase family. Type 1 subfamily. In terms of assembly, homodimer.

The protein resides in the cytoplasm. It catalyses the reaction tRNA(Asx) + L-aspartate + ATP = L-aspartyl-tRNA(Asx) + AMP + diphosphate. In terms of biological role, aspartyl-tRNA synthetase with relaxed tRNA specificity since it is able to aspartylate not only its cognate tRNA(Asp) but also tRNA(Asn). Reaction proceeds in two steps: L-aspartate is first activated by ATP to form Asp-AMP and then transferred to the acceptor end of tRNA(Asp/Asn). The protein is Aspartate--tRNA(Asp/Asn) ligase of Herminiimonas arsenicoxydans.